A 393-amino-acid polypeptide reads, in one-letter code: PPE family protein PPE26 (393 aa).

The protein belongs to the mycobacterial PPE family. Interacts with human TLR2.

In terms of biological role, probably plays a key role in regulating innate and adaptive immune responses through human Toll-like receptor 2 (TLR2). Interacts with TLR2, leading to the subsequent activation of the mitogen-activated protein kinase (MAPK) and nuclear factor kappa B (NF-kappa-B) signaling pathways. Stimulates macrophage activation by augmenting pro-inflammatory cytokine production (TNF-alpha, IL-6 and IL-12p40) and the expression of cell surface molecules (CD80, CD86, MHC class I and II). Also participates in adaptive immunity by directing Th1-polarised immune responses. The chain is PPE family protein PPE26 from Mycobacterium tuberculosis (strain ATCC 25618 / H37Rv).